We begin with the raw amino-acid sequence, 252 residues long: Metalloprotease LoiP (252 aa).

Residues 1-18 (MKIRALLVAMSVATVLTG) form the signal peptide. The N-palmitoyl cysteine moiety is linked to residue Cys-19. Cys-19 carries S-diacylglycerol cysteine lipidation. An intrachain disulfide couples Cys-53 to Cys-108. Residue His-130 coordinates Zn(2+). Glu-131 is a catalytic residue. Positions 134 and 189 each coordinate Zn(2+). Residues 224–252 (RQSSMFDDHPASAERAQHIRDRMSADGIK) form a disordered region.

It belongs to the peptidase M48B family. As to quaternary structure, interacts with Era and BepA. Zn(2+) is required as a cofactor. In terms of processing, the intramolecular disulfide bond improves the stability and the activity of LoiP. It forms even in the absence of the oxido-reductase DsbA.

It is found in the cell outer membrane. Functionally, metalloprotease that cleaves substrates preferentially between Phe-Phe residues. Plays a role in response to some stress conditions. Seems to regulate the expression of speB. This chain is Metalloprotease LoiP (loiP), found in Escherichia coli (strain K12).